The following is a 100-amino-acid chain: NADH-quinone oxidoreductase subunit K 2 (100 aa).

3 helical membrane passes run 2–22 (LAIE…TIGV), 29–49 (IVIF…FIAF), and 61–81 (FVFF…ALMI).

This sequence belongs to the complex I subunit 4L family. As to quaternary structure, NDH-1 is composed of 14 different subunits. Subunits NuoA, H, J, K, L, M, N constitute the membrane sector of the complex.

It localises to the cell inner membrane. The catalysed reaction is a quinone + NADH + 5 H(+)(in) = a quinol + NAD(+) + 4 H(+)(out). In terms of biological role, NDH-1 shuttles electrons from NADH, via FMN and iron-sulfur (Fe-S) centers, to quinones in the respiratory chain. The immediate electron acceptor for the enzyme in this species is believed to be ubiquinone. Couples the redox reaction to proton translocation (for every two electrons transferred, four hydrogen ions are translocated across the cytoplasmic membrane), and thus conserves the redox energy in a proton gradient. This Geobacter sp. (strain M21) protein is NADH-quinone oxidoreductase subunit K 2.